A 156-amino-acid chain; its full sequence is MTQSQYSQTPRLALTDAIIDAKARKNLTFEDIAQGTGLSLAFVTAALLGQHPLPADAARVVVDRLELEEDAFFLLQTIPVRGSIPGGIPTDPTIYRFYEMVQVYGSTLKALVHEQFGDGIISAIDFKLDIKKVDDPNGGSRAVITLDGKYLPTKPF.

Catalysis depends on residues Arg96, Glu99, and Ser122.

Belongs to the cyanase family.

It catalyses the reaction cyanate + hydrogencarbonate + 3 H(+) = NH4(+) + 2 CO2. Functionally, catalyzes the reaction of cyanate with bicarbonate to produce ammonia and carbon dioxide. The protein is Cyanate hydratase of Photorhabdus laumondii subsp. laumondii (strain DSM 15139 / CIP 105565 / TT01) (Photorhabdus luminescens subsp. laumondii).